Reading from the N-terminus, the 188-residue chain is uncharacterized protein (188 aa).

The signal sequence occupies residues 1-23; sequence MFKGQKTLAALAVSLLFTAPVYA. Cys42 and Cys81 are oxidised to a cystine.

The protein belongs to the fimbrial protein family.

The protein resides in the fimbrium. This is an uncharacterized protein from Escherichia coli (strain K12).